A 410-amino-acid polypeptide reads, in one-letter code: uncharacterized protein (410 aa).

Residue His87 coordinates Zn(2+). Asp89 is a catalytic residue. Position 120 (Asp120) interacts with Zn(2+). Residue Glu154 is the Proton acceptor of the active site. Zn(2+) is bound by residues Glu155, Asp184, and His387.

Belongs to the peptidase M20A family. Requires Zn(2+) as cofactor. The cofactor is Co(2+).

This is an uncharacterized protein from Methanocaldococcus jannaschii (strain ATCC 43067 / DSM 2661 / JAL-1 / JCM 10045 / NBRC 100440) (Methanococcus jannaschii).